We begin with the raw amino-acid sequence, 283 residues long: Bifunctional protein FolD (283 aa).

Residues 163–165, Ser-188, and Ile-229 each bind NADP(+); that span reads GRS.

This sequence belongs to the tetrahydrofolate dehydrogenase/cyclohydrolase family. Homodimer.

It carries out the reaction (6R)-5,10-methylene-5,6,7,8-tetrahydrofolate + NADP(+) = (6R)-5,10-methenyltetrahydrofolate + NADPH. The catalysed reaction is (6R)-5,10-methenyltetrahydrofolate + H2O = (6R)-10-formyltetrahydrofolate + H(+). The protein operates within one-carbon metabolism; tetrahydrofolate interconversion. Its function is as follows. Catalyzes the oxidation of 5,10-methylenetetrahydrofolate to 5,10-methenyltetrahydrofolate and then the hydrolysis of 5,10-methenyltetrahydrofolate to 10-formyltetrahydrofolate. This is Bifunctional protein FolD from Latilactobacillus sakei subsp. sakei (strain 23K) (Lactobacillus sakei subsp. sakei).